We begin with the raw amino-acid sequence, 264 residues long: Probable septum site-determining protein MinC (264 aa).

Residues 103–147 form a disordered region; that stretch reads SHGRRPRGGNDAKDADRNDAQDAQGAPEHAQAAEAPASTSAIPPA. A compositionally biased stretch (basic and acidic residues) spans 110–122; it reads GGNDAKDADRNDA. Positions 124–147 are enriched in low complexity; it reads DAQGAPEHAQAAEAPASTSAIPPA.

This sequence belongs to the MinC family. Interacts with MinD and FtsZ.

Cell division inhibitor that blocks the formation of polar Z ring septums. Rapidly oscillates between the poles of the cell to destabilize FtsZ filaments that have formed before they mature into polar Z rings. Prevents FtsZ polymerization. The sequence is that of Probable septum site-determining protein MinC from Ralstonia pickettii (strain 12J).